A 61-amino-acid polypeptide reads, in one-letter code: Small ribosomal subunit protein uS14 (61 aa).

Zn(2+) is bound by residues C24, C27, C40, and C43.

It belongs to the universal ribosomal protein uS14 family. Zinc-binding uS14 subfamily. Part of the 30S ribosomal subunit. Contacts proteins S3 and S10. It depends on Zn(2+) as a cofactor.

Functionally, binds 16S rRNA, required for the assembly of 30S particles and may also be responsible for determining the conformation of the 16S rRNA at the A site. This chain is Small ribosomal subunit protein uS14, found in Ruminiclostridium cellulolyticum (strain ATCC 35319 / DSM 5812 / JCM 6584 / H10) (Clostridium cellulolyticum).